A 215-amino-acid polypeptide reads, in one-letter code: Myelin protein zero-like protein 2 (215 aa).

A signal peptide spans 1–26 (MYGKSPALVLPLLLSLQLTALCPTEA). One can recognise an Ig-like V-type domain in the interval 27–141 (VEIYTSGALE…DGLVGTIRLS (115 aa)). Topologically, residues 27 to 154 (VEIYTSGALE…TVPFSEIYFL (128 aa)) are extracellular. 2 N-linked (GlcNAc...) asparagine glycosylation sites follow: N39 and N118. Cysteines 47 and 123 form a disulfide. Residues 155–175 (AVAIGSACALMIIVVIVVVLF) traverse the membrane as a helical segment. At 176–215 (QHFRKKRWADRADKAEGTKSKEEEKLNQGNKVSVFVEDTD) the chain is on the cytoplasmic side. A compositionally biased stretch (basic and acidic residues) spans 187 to 201 (ADKAEGTKSKEEEKL). The segment at 187 to 215 (ADKAEGTKSKEEEKLNQGNKVSVFVEDTD) is disordered.

The protein belongs to the myelin P0 protein family. As to expression, widely expressed. Expressed in the cochlea, in Deiters' cells, possibly at contact sites with the basilar membrane. Expressed in both outer and inner auditory hair cells. In the stria vascularis, detected in the basal cell layer. Not detected in thymocytes, lymphocytes, macrophage or dendritic cells.

The protein resides in the membrane. Its function is as follows. Mediates homophilic cell-cell adhesion. This is Myelin protein zero-like protein 2 (Mpzl2) from Mus musculus (Mouse).